The following is a 234-amino-acid chain: Biotin transport ATP-binding protein BioM (234 aa).

Residues 1-230 (MQAIDIGHVT…YIAAMQALAR (230 aa)) form the ABC transporter domain. 35–42 (GRNGAGKS) is an ATP binding site.

It belongs to the ABC transporter superfamily. Part of a biotin transporter holocomplex composed of BioM, BioN and BioY. BioMN complexes can be readily purified, but not BioMY complexes. Only the BioMNY complex has ATPase activity.

The protein resides in the cell inner membrane. Its function is as follows. Required for biotin uptake under very low (pM) biotin concentrations but not under higher (nM) concentrations. The polypeptide is Biotin transport ATP-binding protein BioM (bioM) (Rhodobacter capsulatus (strain ATCC BAA-309 / NBRC 16581 / SB1003)).